Reading from the N-terminus, the 307-residue chain is Homoserine O-acetyltransferase (307 aa).

The active-site Acyl-thioester intermediate is the cysteine 142. 2 residues coordinate substrate: lysine 163 and serine 192. Residue histidine 235 is the Proton acceptor of the active site. Residue glutamate 237 is part of the active site. Residue arginine 249 participates in substrate binding.

It belongs to the MetA family.

It is found in the cytoplasm. It carries out the reaction L-homoserine + acetyl-CoA = O-acetyl-L-homoserine + CoA. It participates in amino-acid biosynthesis; L-methionine biosynthesis via de novo pathway; O-acetyl-L-homoserine from L-homoserine: step 1/1. In terms of biological role, transfers an acetyl group from acetyl-CoA to L-homoserine, forming acetyl-L-homoserine. The protein is Homoserine O-acetyltransferase of Desulfitobacterium hafniense (strain DSM 10664 / DCB-2).